The sequence spans 155 residues: 3-hydroxyacyl-[acyl-carrier-protein] dehydratase FabZ (155 aa).

The active site involves His58.

The protein belongs to the thioester dehydratase family. FabZ subfamily.

It is found in the cytoplasm. The catalysed reaction is a (3R)-hydroxyacyl-[ACP] = a (2E)-enoyl-[ACP] + H2O. Functionally, involved in unsaturated fatty acids biosynthesis. Catalyzes the dehydration of short chain beta-hydroxyacyl-ACPs and long chain saturated and unsaturated beta-hydroxyacyl-ACPs. In Rhizobium leguminosarum bv. trifolii (strain WSM2304), this protein is 3-hydroxyacyl-[acyl-carrier-protein] dehydratase FabZ.